The primary structure comprises 212 residues: MQLFHLCLIISCSCPTVQASKLCLGWLWGMDIDPYKEFGATVELLSFLPSDFFPSVRDLLDTASALYREALESPEHCSPHHTALRQAILCWGELMTLATWVGVNLEDPASRDLVVSYVNTNMGLKFRQLLWFHISCLTFGRETVIEYLVSFGVWIRTPPAYRPPNAPILSTLPETTVVRRRGRSPRRRTPSPRRRRSQSPRRRRSQSRESQC.

The signal sequence occupies residues 1 to 19 (MQLFHLCLIISCSCPTVQA). An HBEAG region spans residues 25 to 27 (GWL). Residues 165 to 212 (NAPILSTLPETTVVRRRGRSPRRRTPSPRRRRSQSPRRRRSQSRESQC) are disordered. Residues 178–205 (VRRRGRSPRRRTPSPRRRRSQSPRRRRS) show a composition bias toward basic residues. Residues 184-190 (SPRRRTP) form a 1; half-length repeat. Residues 184 to 206 (SPRRRTPSPRRRRSQSPRRRRSQ) are 3 X 8 AA repeats of S-P-R-R-R-R-S-Q. The propeptide occupies 184–212 (SPRRRTPSPRRRRSQSPRRRRSQSRESQC). 2 repeat units span residues 191 to 198 (SPRRRRSQ) and 199 to 206 (SPRRRRSQ).

Belongs to the orthohepadnavirus precore antigen family. Homodimerizes. In terms of processing, phosphorylated. Post-translationally, cleaved by host furin.

It is found in the secreted. The protein resides in the host nucleus. In terms of biological role, may regulate immune response to the intracellular capsid in acting as a T-cell tolerogen, by having an immunoregulatory effect which prevents destruction of infected cells by cytotoxic T-cells. This immune regulation may predispose to chronicity during perinatal infections and prevent severe liver injury during adult infections. The polypeptide is External core antigen (Homo sapiens (Human)).